The primary structure comprises 532 residues: Glucose-6-phosphate isomerase (532 aa).

The active-site Proton donor is Glu322. Active-site residues include His351 and Lys457.

Belongs to the GPI family.

The protein resides in the cytoplasm. The catalysed reaction is alpha-D-glucose 6-phosphate = beta-D-fructose 6-phosphate. It functions in the pathway carbohydrate biosynthesis; gluconeogenesis. Its pathway is carbohydrate degradation; glycolysis; D-glyceraldehyde 3-phosphate and glycerone phosphate from D-glucose: step 2/4. Catalyzes the reversible isomerization of glucose-6-phosphate to fructose-6-phosphate. This chain is Glucose-6-phosphate isomerase, found in Synechococcus sp. (strain JA-2-3B'a(2-13)) (Cyanobacteria bacterium Yellowstone B-Prime).